The chain runs to 900 residues: Bifunctional uridylyltransferase/uridylyl-removing enzyme (900 aa).

The segment at Met1–Pro342 is uridylyltransferase. A uridylyl-removing region spans residues Leu343–Ser705. Positions Val461–Leu583 constitute an HD domain. ACT domains are found at residues Gln706 to Arg789 and Val816 to Arg891.

The protein belongs to the GlnD family. Mg(2+) serves as cofactor.

It carries out the reaction [protein-PII]-L-tyrosine + UTP = [protein-PII]-uridylyl-L-tyrosine + diphosphate. The catalysed reaction is [protein-PII]-uridylyl-L-tyrosine + H2O = [protein-PII]-L-tyrosine + UMP + H(+). Uridylyltransferase (UTase) activity is inhibited by glutamine, while glutamine activates uridylyl-removing (UR) activity. In terms of biological role, modifies, by uridylylation and deuridylylation, the PII regulatory proteins (GlnB and homologs), in response to the nitrogen status of the cell that GlnD senses through the glutamine level. Under low glutamine levels, catalyzes the conversion of the PII proteins and UTP to PII-UMP and PPi, while under higher glutamine levels, GlnD hydrolyzes PII-UMP to PII and UMP (deuridylylation). Thus, controls uridylylation state and activity of the PII proteins, and plays an important role in the regulation of nitrogen assimilation and metabolism. In Pseudomonas aeruginosa (strain LESB58), this protein is Bifunctional uridylyltransferase/uridylyl-removing enzyme.